Reading from the N-terminus, the 186-residue chain is FMN reductase (NADPH) (186 aa).

This sequence belongs to the SsuE family.

The catalysed reaction is FMNH2 + NADP(+) = FMN + NADPH + 2 H(+). The sequence is that of FMN reductase (NADPH) (msuE) from Pseudomonas aeruginosa (strain ATCC 15692 / DSM 22644 / CIP 104116 / JCM 14847 / LMG 12228 / 1C / PRS 101 / PAO1).